Reading from the N-terminus, the 1048-residue chain is MNQNEHPFAFPETKLPLTSNQNWQLSTQRQRTEKKSITNFTYQEFDYENISRDTLERCLTTIIKHHPIFGAKLSDDFYLHFPSKTHIETFAVNDLSNALKQDIDKQLADTRSAVTKSRSQAIISIMFSILPKNIIRLHVRFNSVVVDNPSVTLFFEQLTQLLSGSPLSFLNQEQTISAYNHKVNNELLSVDLESARWNEYILTLPSSANLPTICEPEKLDETDITRRCITLSQRKWQQLVTVSKKHNVTPEITLASIFSTVLSLWGNQKYLMMRFDITKINDYTGIIGQFTEPLLVGMSGFEQSFLSLVKNNQKKFEEAYHYDVKVPVFQCVNKLSNISDSHRYPANITFSSELLNTNHSKKAVWGCRQSANTWLSLHAVIEQEQLVLQWDSQDAIFPKDMIKDMLHSYTDLLDLLSQKDVNWAQPLPTLLPKHQESIRNKINQQGDLELTKELLHQRFFKNVESTPNALAIIHGQESLDYITLASYAKSCAGALTEAGVKSGDRVAVTMNKGIGQIVAVLGILYAGAIYVPVSLDQPQERRESIYQGAGINVILINESDSKNSPSNDLFFFLDWQTAIKSEPMRSPQDVAPSQPAYIIYTSGSTGTPKGVVISHQGALNTCIAINRRYQIGKNDRVLALSALHFDLSVYDIFGLLSAGGTIVLVSELERRDPIAWCQAIEEHNVTMWNSVPALFDMLLTYATCFNSIAPSKLRLTMLSGDWIGLDLPQRYRNYRVDGQFIAMGGATEASIWSNVFDVEKVPMEWRSIPYGYPLPRQQYRVVDDLGRDCPDWVAGELWIGGDGIALGYFDDELKTQAQFLHIDGHAWYRTGDMGCYWPDGTLEFLGRRDKQVKVGGYRIELGEIEVALNNIPGVQRAVAIAVGNKDKTLAAFIVMDSEQAPIVTAPLDAEEVQLLLNKQLPNYMVPKRIIFLETFPLTANGKVDHKALTRMTNREKKTSQSINKPIITASEDRVAKIWNDVLGPTELYKSSDFFLSGGDAYNAIEVVKRCHKAGYLIKLSMLYRYSTIEAFAIIMDRCRLAPQEEAEL.

The Carrier domain occupies 965-1039; the sequence is PIITASEDRV…AFAIIMDRCR (75 aa).

It belongs to the ATP-dependent AMP-binding enzyme family.

Its pathway is siderophore biosynthesis; anguibactin biosynthesis. In terms of biological role, bifunctional protein that plays an essential role in virulence. Plays a role in both the production of the siderophore anguibactin and the regulation of iron transport genes. The sequence is that of Anguibactin system regulator (angR) from Vibrio anguillarum (Listonella anguillarum).